The sequence spans 357 residues: Dynein axonemal assembly factor 10 (357 aa).

WD repeat units lie at residues Glu63 to Tyr105, Asn115 to Ala154, Glu162 to Glu205, Asn207 to Gly249, Ala257 to Lys297, and Leu319 to Ile357.

Component of the PAQosome complex which is responsible for the biogenesis of several protein complexes and which consists of R2TP complex members RUVBL1, RUVBL2, RPAP3 and PIH1D1, URI complex members PFDN2, PFDN6, PDRG1, UXT and URI1 as well as ASDURF, POLR2E and DNAAF10/WDR92. Interacts with PIH1D1; the interaction associates DNAAF10 with the R2TP complex. Interacts with several dynein axonemal assembly factors. Widely expressed with the highest expression in testis.

It localises to the dynein axonemal particle. In terms of biological role, key assembly factor specifically required for the stability of axonemal dynein heavy chains in cytoplasm. This Homo sapiens (Human) protein is Dynein axonemal assembly factor 10.